The primary structure comprises 279 residues: Large ribosomal subunit protein uL2 (279 aa).

A disordered region spans residues 223–279 (VAMNPVDHPMGGGEGRSSGGHPRSRKGLYAKGGKTRSANKYSKNMIVKKRVNKRLSK). Positions 268-279 (IVKKRVNKRLSK) are enriched in basic residues.

This sequence belongs to the universal ribosomal protein uL2 family. As to quaternary structure, part of the 50S ribosomal subunit. Forms a bridge to the 30S subunit in the 70S ribosome.

Functionally, one of the primary rRNA binding proteins. Required for association of the 30S and 50S subunits to form the 70S ribosome, for tRNA binding and peptide bond formation. It has been suggested to have peptidyltransferase activity; this is somewhat controversial. Makes several contacts with the 16S rRNA in the 70S ribosome. This chain is Large ribosomal subunit protein uL2, found in Cytophaga hutchinsonii (strain ATCC 33406 / DSM 1761 / CIP 103989 / NBRC 15051 / NCIMB 9469 / D465).